Reading from the N-terminus, the 540-residue chain is Chaperonin GroEL 1 (540 aa).

ATP is bound by residues 30–33 (TLGP), Lys-51, 87–91 (DGTTT), Gly-415, 480–482 (NAA), and Asp-496.

This sequence belongs to the chaperonin (HSP60) family. In terms of assembly, forms a cylinder of 14 subunits composed of two heptameric rings stacked back-to-back. Interacts with the co-chaperonin GroES.

The protein resides in the cytoplasm. It carries out the reaction ATP + H2O + a folded polypeptide = ADP + phosphate + an unfolded polypeptide.. Together with its co-chaperonin GroES, plays an essential role in assisting protein folding. The GroEL-GroES system forms a nano-cage that allows encapsulation of the non-native substrate proteins and provides a physical environment optimized to promote and accelerate protein folding. The sequence is that of Chaperonin GroEL 1 from Bradyrhizobium diazoefficiens (strain JCM 10833 / BCRC 13528 / IAM 13628 / NBRC 14792 / USDA 110).